A 226-amino-acid polypeptide reads, in one-letter code: Urease accessory protein UreF (226 aa).

The protein belongs to the UreF family. As to quaternary structure, ureD, UreF and UreG form a complex that acts as a GTP-hydrolysis-dependent molecular chaperone, activating the urease apoprotein by helping to assemble the nickel containing metallocenter of UreC. The UreE protein probably delivers the nickel.

The protein localises to the cytoplasm. Its function is as follows. Required for maturation of urease via the functional incorporation of the urease nickel metallocenter. The protein is Urease accessory protein UreF of Burkholderia lata (strain ATCC 17760 / DSM 23089 / LMG 22485 / NCIMB 9086 / R18194 / 383).